A 126-amino-acid chain; its full sequence is Late histone H2A.3, gonadal (126 aa).

Basic residues predominate over residues 1–18; it reads MSGRGKGAKAKGKAKSRS. The segment at 1–21 is disordered; that stretch reads MSGRGKGAKAKGKAKSRSSRA. Serine 2 is modified (N-acetylserine). Serine 2 is subject to Phosphoserine. Glutamine 104 is subject to N5-methylglutamine. Lysine 119 is covalently cross-linked (Glycyl lysine isopeptide (Lys-Gly) (interchain with G-Cter in ubiquitin)).

This sequence belongs to the histone H2A family. In terms of assembly, the nucleosome is a histone octamer containing two molecules each of H2A, H2B, H3 and H4 assembled in one H3-H4 heterotetramer and two H2A-H2B heterodimers. The octamer wraps approximately 147 bp of DNA. Monoubiquitination of Lys-119 gives a specific tag for epigenetic transcriptional repression. Post-translationally, phosphorylation of Ser-2 directly represses transcription.

The protein resides in the nucleus. It localises to the chromosome. Its function is as follows. Core component of nucleosome. Nucleosomes wrap and compact DNA into chromatin, limiting DNA accessibility to the cellular machineries which require DNA as a template. Histones thereby play a central role in transcription regulation, DNA repair, DNA replication and chromosomal stability. DNA accessibility is regulated via a complex set of post-translational modifications of histones, also called histone code, and nucleosome remodeling. This Psammechinus miliaris (Green sea urchin) protein is Late histone H2A.3, gonadal.